We begin with the raw amino-acid sequence, 177 residues long: Large ribosomal subunit protein uL6 (177 aa).

The protein belongs to the universal ribosomal protein uL6 family. As to quaternary structure, part of the 50S ribosomal subunit.

Its function is as follows. This protein binds to the 23S rRNA, and is important in its secondary structure. It is located near the subunit interface in the base of the L7/L12 stalk, and near the tRNA binding site of the peptidyltransferase center. The protein is Large ribosomal subunit protein uL6 of Nitrobacter winogradskyi (strain ATCC 25391 / DSM 10237 / CIP 104748 / NCIMB 11846 / Nb-255).